Reading from the N-terminus, the 424-residue chain is Serine--tRNA ligase (424 aa).

230 to 232 contributes to the L-serine binding site; sequence TSE. Residues 261–263 and Val277 each bind ATP; that span reads RKE. Glu284 lines the L-serine pocket. 348-351 provides a ligand contact to ATP; sequence ELTS. Thr382 contributes to the L-serine binding site.

Belongs to the class-II aminoacyl-tRNA synthetase family. Type-1 seryl-tRNA synthetase subfamily. In terms of assembly, homodimer. The tRNA molecule binds across the dimer.

It is found in the cytoplasm. It catalyses the reaction tRNA(Ser) + L-serine + ATP = L-seryl-tRNA(Ser) + AMP + diphosphate + H(+). The enzyme catalyses tRNA(Sec) + L-serine + ATP = L-seryl-tRNA(Sec) + AMP + diphosphate + H(+). The protein operates within aminoacyl-tRNA biosynthesis; selenocysteinyl-tRNA(Sec) biosynthesis; L-seryl-tRNA(Sec) from L-serine and tRNA(Sec): step 1/1. In terms of biological role, catalyzes the attachment of serine to tRNA(Ser). Is also able to aminoacylate tRNA(Sec) with serine, to form the misacylated tRNA L-seryl-tRNA(Sec), which will be further converted into selenocysteinyl-tRNA(Sec). The sequence is that of Serine--tRNA ligase from Nocardioides sp. (strain ATCC BAA-499 / JS614).